We begin with the raw amino-acid sequence, 154 residues long: MGGGLSTLEQKLTEMITAPVEALGYELVGIEFIRGRTSTLRIYIDSEDGINVDDCADVSHQVSAVLDVEDPISVAYNLEVSSPGLDRPMFTADHYARFQGEEVALVLRMAVQNRRKWQGIIKAVDGEMITVTVEGKDEVFALSNIQKANLVPHF.

Belongs to the RimP family.

The protein resides in the cytoplasm. Its function is as follows. Required for maturation of 30S ribosomal subunits. This chain is Ribosome maturation factor RimP, found in Salmonella gallinarum (strain 287/91 / NCTC 13346).